The following is a 21-amino-acid chain: Bombinin-H4 (21 aa).

Ile-2 bears the D-allo-isoleucine mark. Position 20 is an isoleucine amide (Ile-20).

This sequence belongs to the bombinin family. In terms of tissue distribution, expressed by the skin glands.

Its subcellular location is the secreted. In terms of biological role, has antimicrobial and hemolytic activities. The chain is Bombinin-H4 from Bombina variegata (Yellow-bellied toad).